Reading from the N-terminus, the 227-residue chain is GRF-interacting factor 1 (227 aa).

Low complexity predominate over residues 124 to 139; the sequence is ALSPLQQQQQQQAAAA. 2 disordered regions span residues 124–160 and 188–227; these read ALSP…LHGE and GGGG…EEGS. A compositionally biased stretch (basic and acidic residues) spans 217 to 227; it reads EYLKGTEEEGS.

Belongs to the SS18 family. Interacts with GRF4. Highly expressed in internodes, nodes, developing spikelets and developing anthers. Expressed at low levels in roots and mature glumes.

It is found in the nucleus. The protein localises to the cytoplasm. In terms of biological role, transcription coactivator that plays a role in the regulation of meristematic function in leaves, stems and inflorescences. May regulate leaf size, length of stem internodes, and seed size by promoting cell expansion. Transcription coactivator that plays a role in the regulation of grain size. Component of a network formed by the microRNA396 (miRNA396), the GRFs and their interacting factors (GIFs) acting in the regulation of meristem function, at least partially through the control of cell proliferation. Component of the miRNA396c-GRF4-GIF1 regulatory module that plays an important role in grain size determination. The chain is GRF-interacting factor 1 from Oryza sativa subsp. japonica (Rice).